The chain runs to 152 residues: UPF0266 membrane protein YobD (152 aa).

Transmembrane regions (helical) follow at residues 6 to 26 (LVLI…QFIM), 45 to 65 (IDSV…VTNH), and 67 to 87 (ALIT…IFWI).

Belongs to the UPF0266 family.

It localises to the cell inner membrane. The protein is UPF0266 membrane protein YobD of Escherichia coli O127:H6 (strain E2348/69 / EPEC).